The chain runs to 217 residues: UPF0319 protein VS_II0881 (217 aa).

Positions 1-21 are cleaved as a signal peptide; the sequence is MKTIQSIALLSAIVAAPSVLA.

The protein belongs to the UPF0319 family.

In Vibrio atlanticus (strain LGP32) (Vibrio splendidus (strain Mel32)), this protein is UPF0319 protein VS_II0881.